The sequence spans 877 residues: GTPase activating protein homolog 2 (877 aa).

Residues 14–285 (FKFTDNLWDG…SVEMIDITND (272 aa)) enclose the F-BAR domain. The stretch at 130–214 (QEGIKLKQDM…SNCDEEYREQ (85 aa)) forms a coiled coil. The Rho-GAP domain occupies 374–560 (VSLDELMNRQ…TLIKQIPPPL (187 aa)). Disordered stretches follow at residues 589–612 (DQLSNDDNNNSNTNTSNISIGSGS), 644–704 (LPPL…AEPT), and 749–800 (AATP…LAST). Low complexity-rich tracts occupy residues 593-612 (NDDNNNSNTNTSNISIGSGS), 653-676 (SGSGNESNSSSSNSTTTPTGSPTT), and 749-779 (AATPTTTTPTTTPTTTTSPTTATIPAVSTST). The segment covering 780-800 (IKTSSPDRTTPLTSSPPLAST) has biased composition (polar residues).

It localises to the cytoplasm. It is found in the contractile vacuole. Its function is as follows. Rho GTPase-activating protein involved in the signal transduction pathway. Regulator of the contractile vacuole network as well as involved in driving vacuole emptying. This is GTPase activating protein homolog 2 (mgp2) from Dictyostelium discoideum (Social amoeba).